The primary structure comprises 128 residues: Small ribosomal subunit protein bS6 (128 aa).

Residues 105–128 (AKVTEEEPVEAAPEAKVETTTEEE) are disordered. Over residues 117-128 (PEAKVETTTEEE) the composition is skewed to basic and acidic residues.

It belongs to the bacterial ribosomal protein bS6 family.

In terms of biological role, binds together with bS18 to 16S ribosomal RNA. In Geotalea daltonii (strain DSM 22248 / JCM 15807 / FRC-32) (Geobacter daltonii), this protein is Small ribosomal subunit protein bS6.